A 144-amino-acid polypeptide reads, in one-letter code: Protein MIX23 (144 aa).

Alanine 2 carries the N-acetylalanine modification. The stretch at 82–120 forms a coiled coil; sequence VKNLREEREKNLDDLTLLKQLRKEQTKLKWMQSELNVEE. Lysine 100 bears the N6-acetyllysine mark.

The protein belongs to the MIX23 family.

The chain is Protein MIX23 from Homo sapiens (Human).